The sequence spans 185 residues: Transmembrane protein 252 (185 aa).

2 consecutive transmembrane segments (helical) span residues 8–28 (VLCA…GFFI) and 39–59 (LVVA…GIFW). The tract at residues 125–149 (YTETSLEPQDKDKNDPQPEAPPPYP) is disordered.

The protein localises to the membrane. The chain is Transmembrane protein 252 (Tmem252) from Rattus norvegicus (Rat).